The primary structure comprises 86 residues: Toxin To8 (86 aa).

The first 20 residues, 1–20, serve as a signal peptide directing secretion; that stretch reads MTRFVLFISCFFLIGMVVEC. One can recognise an LCN-type CS-alpha/beta domain in the interval 21–83; the sequence is KEGYLLGSRG…LWESDTNECG (63 aa). 4 cysteine pairs are disulfide-bonded: C31/C82, C35/C57, C43/C63, and C47/C65. C82 carries the post-translational modification Cysteine amide.

The protein belongs to the long (4 C-C) scorpion toxin superfamily. Sodium channel inhibitor family. Beta subfamily. Expressed by the venom gland.

The protein resides in the secreted. Its function is as follows. Beta toxins bind voltage-independently at site-4 of sodium channels (Nav) and shift the voltage of activation toward more negative potentials thereby affecting sodium channel activation and promoting spontaneous and repetitive firing. This chain is Toxin To8, found in Tityus obscurus (Amazonian scorpion).